A 480-amino-acid polypeptide reads, in one-letter code: Iroquois-class homeodomain protein IRX-1 (480 aa).

Positions 125 to 188 form a DNA-binding region, homeobox; TALE-type; the sequence is YGDPGRPKNA…ANARRRLKKE (64 aa). 3 disordered regions span residues 190-268, 280-354, and 401-480; these read KVTW…QGSP, SPLG…PLQH, and PHGP…LPSA. Residues 210–228 show a composition bias toward acidic residues; it reads TEGDPEKAEDDEEIDLESI. A compositionally biased stretch (basic and acidic residues) spans 229-239; the sequence is DIDKIDEHDGD. Phosphoserine is present on S241. Low complexity-rich tracts occupy residues 252–262 and 340–351; these read PHAPAAPSALA and HPGAHGPSAGAP. Over residues 404–417 the composition is skewed to pro residues; it reads PHLPAPPPPQPPVA.

This sequence belongs to the TALE/IRO homeobox family.

It is found in the nucleus. In Homo sapiens (Human), this protein is Iroquois-class homeodomain protein IRX-1 (IRX1).